The primary structure comprises 644 residues: Macrolide export ATP-binding/permease protein MacB (644 aa).

In terms of domain architecture, ABC transporter spans 4–242 (IECKNINRYF…SNVGRIQEKA (239 aa)). 40 to 47 (GQSGSGKS) contacts ATP. Helical transmembrane passes span 270 to 290 (LLTM…VALG), 524 to 544 (IALI…LVSV), 574 to 594 (LICI…SLVF), and 607 to 627 (AASV…FGFM).

This sequence belongs to the ABC transporter superfamily. Macrolide exporter (TC 3.A.1.122) family. In terms of assembly, homodimer.

The protein resides in the cell inner membrane. Functionally, non-canonical ABC transporter that contains transmembrane domains (TMD), which form a pore in the inner membrane, and an ATP-binding domain (NBD), which is responsible for energy generation. Overexpression confers resistance against macrolides. This chain is Macrolide export ATP-binding/permease protein MacB, found in Neisseria gonorrhoeae.